Consider the following 533-residue polypeptide: Calcitonin receptor (533 aa).

The signal sequence occupies residues 1–41 (MTPRRSRVKRRNLRKPKMRFLLVNRFTLLLLLLVSPTPVLQ). Residues 42–163 (APTNLTDSGL…FTSEKLQNAY (122 aa)) are Extracellular-facing. N-linked (GlcNAc...) asparagine glycans are attached at residues Asn-45, Asn-90, Asn-142, and Asn-147. 3 cysteine pairs are disulfide-bonded: Cys-72–Cys-98, Cys-89–Cys-129, and Cys-112–Cys-151. The chain crosses the membrane as a helical span at residues 164 to 186 (VLYYLALVGHSLSIAALVASMLI). Residues 187 to 198 (FWIFKNLSCQRV) are Cytoplasmic-facing. The helical transmembrane segment at 199 to 219 (TLHKHMFLTYILNSIIIIIHL) threads the bilayer. Over 220–273 (VEVVPNGDLVRRDPMHIFHHNTHMWTMQWELSPPLPLSAHEGKMDPHASEVISC) the chain is Extracellular. Residues Cys-273 and Cys-343 are joined by a disulfide bond. A helical transmembrane segment spans residues 274 to 296 (KVLHFLHQYMMSCNYFWMLCEGI). At 297–313 (YLHTLIVMAVFTDEQRL) the chain is on the cytoplasmic side. The chain crosses the membrane as a helical span at residues 314–334 (RWYYLLGWGFPIVPTIIHAIT). Over 335–350 (RALYYNDNCWLSAETH) the chain is Extracellular. A helical membrane pass occupies residues 351–374 (LLYIIHGPVMVALVVNFFFLLNIV). The Cytoplasmic portion of the chain corresponds to 375–394 (RVLVTKMRQTHEAESYMYLK). The helical transmembrane segment at 395–413 (AVKATMVLVPLLGIQFVVF) threads the bilayer. Residues 414 to 421 (PWRPSNKV) are Extracellular-facing. The chain crosses the membrane as a helical span at residues 422-448 (LGKIYDYLMHSLIHFQGFFVATIYCFC). The Cytoplasmic portion of the chain corresponds to 449–533 (NHEVQVTLKR…MNVIQQDASA (85 aa)).

The protein belongs to the G-protein coupled receptor 2 family. In terms of assembly, heterodimer of CALCR and RAMP1, RAMP2 or RAMP3; the receptor complexes function as AMYR1, AMYR2 and AMYR3 receptors, respectively, and respond to amylin/IAPP, calcitonin/CT and CGRP1 ligands. Interacts with GPRASP2.

It is found in the cell membrane. Functionally, g protein-coupled receptor activated by ligand peptides amylin (IAPP), calcitonin (CT/CALCA) and calcitonin gene-related peptide type 1 (CGRP1/CALCA). CALCR interacts with receptor-activity-modifying proteins RAMP1, 2 and 3 to form receptor complexes AMYR1, 2 and 3, respectively. IAPP, CT and CGRP1 activate CALCR and AMYRs with distinct modes of receptor activation resulting in specific phenotypes. Ligand binding causes a conformation change that triggers signaling via guanine nucleotide-binding proteins (G proteins) and modulates the activity of downstream effectors. Activates cAMP-dependent pathway. This chain is Calcitonin receptor, found in Mus musculus (Mouse).